Consider the following 159-residue polypeptide: NADH-quinone oxidoreductase subunit B (159 aa).

Residues cysteine 37, cysteine 38, cysteine 102, and cysteine 132 each coordinate [4Fe-4S] cluster.

Belongs to the complex I 20 kDa subunit family. In terms of assembly, NDH-1 is composed of 14 different subunits. Subunits NuoB, C, D, E, F, and G constitute the peripheral sector of the complex. [4Fe-4S] cluster is required as a cofactor.

It localises to the cell inner membrane. It catalyses the reaction a quinone + NADH + 5 H(+)(in) = a quinol + NAD(+) + 4 H(+)(out). Functionally, NDH-1 shuttles electrons from NADH, via FMN and iron-sulfur (Fe-S) centers, to quinones in the respiratory chain. The immediate electron acceptor for the enzyme in this species is believed to be ubiquinone. Couples the redox reaction to proton translocation (for every two electrons transferred, four hydrogen ions are translocated across the cytoplasmic membrane), and thus conserves the redox energy in a proton gradient. This is NADH-quinone oxidoreductase subunit B from Variovorax paradoxus (strain S110).